The following is a 606-amino-acid chain: MEPPRGPPANGAEPSRAVGTVKVYLPNKQRTVVTVRDGMSVYDSLDKALKVRGLNQDCCVVYRLIKGRKTVTAWDTAIAPLDGEELIVEVLEDVPLTMHNFVRKTFFSLAFCDFCLKFLFHGFRCQTCGYKFHQHCSSKVPTVCVDMSTNRQQFYHSVQDLSGGSRQHEAPSNRPLNELLTPQGPSPRTQHCDPEHFPFPAPANAPLQRIRSTSTPNVHMVSTTAPMDSNLIQLTGQSFSTDAAGSRGGSDGTPRGSPSPASVSSGRKSPHSKSPAEQRERKSLADDKKKVKNLGYRDSGYYWEVPPSEVQLLKRIGTGSFGTVFRGRWHGDVAVKVLKVSQPTAEQAQAFKNEMQVLRKTRHVNILLFMGFMTRPGFAIITQWCEGSSLYHHLHVADTRFDMVQLIDVARQTAQGMDYLHAKNIIHRDLKSNNIFLHEGLTVKIGDFGLATVKTRWSGAQPLEQPSGSVLWMAAEVIRMQDPNPYSFQSDVYAYGVVLYELMTGSLPYSHIGCRDQIIFMVGRGYLSPDLSKISSNCPKAMRRLLSDCLKFQREERPLFPQILATIELLQRSLPKIERSASEPSLHRTQADELPACLLSAARLVP.

The 73-residue stretch at Gly19–Leu91 folds into the RBD domain. The segment at Met98–Cys144 adopts a Phorbol-ester/DAG-type zinc-finger fold. Zn(2+) is bound by residues His99, Cys112, Cys115, Cys125, Cys128, His133, Cys136, and Cys144. Residues Ser157 and Ser162 each carry the phosphoserine modification. The disordered stretch occupies residues Asp160 to Leu207. Phosphothreonine is present on Thr181. 2 positions are modified to phosphoserine: Ser186 and Ser214. The segment at Ser240–Lys290 is disordered. Thr253 carries the phosphothreonine modification. Phosphoserine is present on residues Ser257 and Ser269. The segment covering Ser274–Lys289 has biased composition (basic and acidic residues). One can recognise a Protein kinase domain in the interval Val310–Leu570. ATP contacts are provided by residues Ile316–Val324 and Lys336. Thr318 bears the Phosphothreonine mark. The active-site Proton acceptor is the Asp429.

It belongs to the protein kinase superfamily. TKL Ser/Thr protein kinase family. RAF subfamily. As to quaternary structure, interacts with TH1L/NELFD. The cofactor is Zn(2+). Post-translationally, dephosphorylation of Ser-214 by the SHOC2-MRAS-PP1c (SMP) complex consisting of SHOC2, GTP-bound M-Ras/MRAS and the catalytic subunit of protein phosphatase 1 (PPP1CA, PPP1CB or PPP1CC); this relieves inactivation and stimulates kinase activity. In terms of tissue distribution, predominantly in urogenital tissues.

The enzyme catalyses L-seryl-[protein] + ATP = O-phospho-L-seryl-[protein] + ADP + H(+). The catalysed reaction is L-threonyl-[protein] + ATP = O-phospho-L-threonyl-[protein] + ADP + H(+). Functionally, involved in the transduction of mitogenic signals from the cell membrane to the nucleus. May also regulate the TOR signaling cascade. Phosphorylates PFKFB2. Its function is as follows. Serves as a positive regulator of myogenic differentiation by inducing cell cycle arrest, the expression of myogenin and other muscle-specific proteins, and myotube formation. The polypeptide is Serine/threonine-protein kinase A-Raf (ARAF) (Homo sapiens (Human)).